The following is a 277-amino-acid chain: MGIKFTKMHGLGNDFIVLDGVNQSIQLTVEQIQKLANRHTGIGFDQCLLIESSQTEGIDFNYRIFNADGQEVGQCGNGARCIALFARYYGLTAKNKLTVATKTTLMDLIINEDNSVSVNMGVPRLAPGEIPLLADRQSPEYSLELNNGNTVNLHAISVGNPHAVLLVENIDTAPVNSLGQQISFHPQFPEQVNVGFMQIINHEKINLRVYERGCGETIACGSGAVAAAAIARLFYNLSDKITVHLPGGDLCIQWPCPTAPIILTGPAAFVYEGTLLS.

Positions 13, 46, and 66 each coordinate substrate. Cys75 acts as the Proton donor in catalysis. Substrate-binding positions include 76–77 (GN), Asn160, Asn193, and 211–212 (ER). The Proton acceptor role is filled by Cys220. 221-222 (GS) is a substrate binding site.

It belongs to the diaminopimelate epimerase family. As to quaternary structure, homodimer.

The protein localises to the cytoplasm. The catalysed reaction is (2S,6S)-2,6-diaminopimelate = meso-2,6-diaminopimelate. The protein operates within amino-acid biosynthesis; L-lysine biosynthesis via DAP pathway; DL-2,6-diaminopimelate from LL-2,6-diaminopimelate: step 1/1. Catalyzes the stereoinversion of LL-2,6-diaminopimelate (L,L-DAP) to meso-diaminopimelate (meso-DAP), a precursor of L-lysine and an essential component of the bacterial peptidoglycan. The polypeptide is Diaminopimelate epimerase (Legionella pneumophila subsp. pneumophila (strain Philadelphia 1 / ATCC 33152 / DSM 7513)).